The primary structure comprises 211 residues: dITP/XTP pyrophosphatase (211 aa).

7 to 12 (TSNKKK) contacts substrate. Glu-43 and Asp-72 together coordinate Mg(2+). Asp-72 acts as the Proton acceptor in catalysis. Substrate contacts are provided by residues Ser-73, 169–172 (FGYD), Lys-190, and 195–196 (HR).

It belongs to the HAM1 NTPase family. In terms of assembly, homodimer. Mg(2+) serves as cofactor.

The enzyme catalyses XTP + H2O = XMP + diphosphate + H(+). The catalysed reaction is dITP + H2O = dIMP + diphosphate + H(+). It carries out the reaction ITP + H2O = IMP + diphosphate + H(+). Functionally, pyrophosphatase that catalyzes the hydrolysis of nucleoside triphosphates to their monophosphate derivatives, with a high preference for the non-canonical purine nucleotides XTP (xanthosine triphosphate), dITP (deoxyinosine triphosphate) and ITP. Seems to function as a house-cleaning enzyme that removes non-canonical purine nucleotides from the nucleotide pool, thus preventing their incorporation into DNA/RNA and avoiding chromosomal lesions. The polypeptide is dITP/XTP pyrophosphatase (Hydrogenobaculum sp. (strain Y04AAS1)).